A 63-amino-acid chain; its full sequence is Large ribosomal subunit protein bL28 (63 aa).

Belongs to the bacterial ribosomal protein bL28 family.

This is Large ribosomal subunit protein bL28 from Clostridium beijerinckii (strain ATCC 51743 / NCIMB 8052) (Clostridium acetobutylicum).